Consider the following 822-residue polypeptide: Probable alpha,alpha-trehalose-phosphate synthase [UDP-forming] 2 (822 aa).

The segment at 12–479 (PRLLVVANRL…GLDFMSELNG (468 aa)) is glycosyltransferase.

The protein in the N-terminal section; belongs to the glycosyltransferase 20 family. This sequence in the C-terminal section; belongs to the trehalose phosphatase family.

It carries out the reaction D-glucose 6-phosphate + UDP-alpha-D-glucose = alpha,alpha-trehalose 6-phosphate + UDP + H(+). The sequence is that of Probable alpha,alpha-trehalose-phosphate synthase [UDP-forming] 2 (TPS2) from Arabidopsis thaliana (Mouse-ear cress).